We begin with the raw amino-acid sequence, 233 residues long: Leucyl/phenylalanyl-tRNA--protein transferase (233 aa).

Belongs to the L/F-transferase family.

The protein resides in the cytoplasm. It catalyses the reaction N-terminal L-lysyl-[protein] + L-leucyl-tRNA(Leu) = N-terminal L-leucyl-L-lysyl-[protein] + tRNA(Leu) + H(+). It carries out the reaction N-terminal L-arginyl-[protein] + L-leucyl-tRNA(Leu) = N-terminal L-leucyl-L-arginyl-[protein] + tRNA(Leu) + H(+). The enzyme catalyses L-phenylalanyl-tRNA(Phe) + an N-terminal L-alpha-aminoacyl-[protein] = an N-terminal L-phenylalanyl-L-alpha-aminoacyl-[protein] + tRNA(Phe). Functions in the N-end rule pathway of protein degradation where it conjugates Leu, Phe and, less efficiently, Met from aminoacyl-tRNAs to the N-termini of proteins containing an N-terminal arginine or lysine. The protein is Leucyl/phenylalanyl-tRNA--protein transferase of Klebsiella pneumoniae subsp. pneumoniae (strain ATCC 700721 / MGH 78578).